Reading from the N-terminus, the 464-residue chain is 3-isopropylmalate dehydratase large subunit (464 aa).

Residues Cys-345, Cys-405, and Cys-408 each contribute to the [4Fe-4S] cluster site.

This sequence belongs to the aconitase/IPM isomerase family. LeuC type 1 subfamily. Heterodimer of LeuC and LeuD. Requires [4Fe-4S] cluster as cofactor.

The enzyme catalyses (2R,3S)-3-isopropylmalate = (2S)-2-isopropylmalate. The protein operates within amino-acid biosynthesis; L-leucine biosynthesis; L-leucine from 3-methyl-2-oxobutanoate: step 2/4. Functionally, catalyzes the isomerization between 2-isopropylmalate and 3-isopropylmalate, via the formation of 2-isopropylmaleate. In Bacteroides thetaiotaomicron (strain ATCC 29148 / DSM 2079 / JCM 5827 / CCUG 10774 / NCTC 10582 / VPI-5482 / E50), this protein is 3-isopropylmalate dehydratase large subunit.